A 276-amino-acid polypeptide reads, in one-letter code: UPF0328 protein ECU01_0090/ECU01_1520/ECU02_1550/ECU08_0020 (276 aa).

Positions 1–24 are disordered; the sequence is MGIIDVQRSHLTATPSKERDAPAH.

This sequence belongs to the UPF0328 family.

The protein is UPF0328 protein ECU01_0090/ECU01_1520/ECU02_1550/ECU08_0020 of Encephalitozoon cuniculi (strain GB-M1) (Microsporidian parasite).